Reading from the N-terminus, the 392-residue chain is Sex-determining region Y protein (392 aa).

A sufficient for interaction with KPNB1 region spans residues 4–81 (HVKRPMNAFM…YKYQPHRRAK (78 aa)). The segment at residues 5–73 (VKRPMNAFMV…LHREKYPNYK (69 aa)) is a DNA-binding region (HMG box). Required for nuclear localization stretches follow at residues 6–22 (KRPM…ERHK) and 75–81 (QPHRRAK). Residues 52-84 (RPFFQEAQRLKILHREKYPNYKYQPHRRAKVSQ) form a sufficient for interaction with EP300 region. Lys81 is modified (N6-acetyllysine). The tract at residues 92–144 (AVASTKLYNLLQWDRNPHAITYRQDWSRAAHLYSKNQQSFYWQPVDIPTGHLQ) is necessary for interaction with ZNF208 isoform KRAB-O. The interval 94 to 138 (ASTKLYNLLQWDRNPHAITYRQDWSRAAHLYSKNQQSFYWQPVDI) is necessary for interaction with SLC9A3R2 and nuclear accumulation of SLC9A3R2. Residues 142 to 361 (HLQQQQQQQQ…QQQQQQQQQQ (220 aa)) are disordered. Over residues 144–181 (QQQQQQQQQQQFHNHHQQQQQFYDHHQQQQQQQQQQQQ) the composition is skewed to low complexity. Composition is skewed to basic and acidic residues over residues 182-197 (FHDH…DHHQ) and 210-228 (QEQQ…HDHQ). The segment covering 229–238 (QQQQQQQQQQ) has biased composition (low complexity). Basic and acidic residues-rich tracts occupy residues 239–250 (FHDHHQQKQQFH), 261–295 (FHDH…HDHP), and 313–349 (QFHD…DHHQ). Residues 350-361 (QQQQQQQQQQQQ) show a composition bias toward low complexity.

This sequence belongs to the SRY family. Interacts with KPNB1, ZNF208 isoform KRAB-O, PARP1 and SLC9A3R2. The interaction with KPNB1 is sensitive to dissociation by Ran in the GTP-bound form. Interaction with PARP1 impaired its DNA-binding activity. Interacts with CALM, EP300, HDAC3 and WT1. The interaction with EP300 modulates its DNA-binding activity. Post-translationally, degraded due to the presence of a degron at the C-terminus that promotes its degradation. In terms of processing, phosphorylated on serine residues by PKA. Phosphorylation by PKA enhances its DNA-binding activity and stimulates transcription repression. Acetylation of Lys-81 contributes to its nuclear localization and enhances its interaction with KPNB1. Post-translationally, poly-ADP-ribosylated by PARP1. ADP-ribosylation reduces its DNA-binding activity. Expressed in gonadal somatic pre-Sertoli cells. Expressed in the substantia nigra of the brain (at protein level). Expressed in diencephalon, cortex, the substantia nigra of the midbrain and the medial mammillary bodies of the hypothalamus of male, but not female. In terms of tissue distribution, expressed in gonadal somatic pre-Sertoli cells. While it is expressed at lower level compared to isoform Sry-S, this form is more stable and constitutes the predominant protein product of the Sry locus in XY gonads (at protein level).

The protein localises to the nucleus speckle. Its subcellular location is the cytoplasm. It is found in the nucleus. In terms of biological role, transcriptional regulator that controls a genetic switch in male development. It is necessary and sufficient for initiating male sex determination by directing the development of supporting cell precursors (pre-Sertoli cells) as Sertoli rather than granulosa cells. Involved in different aspects of gene regulation including promoter activation or repression. Binds to the DNA consensus sequence 5'-[AT]AACAA[AT]-3'. SRY HMG box recognizes DNA by partial intercalation in the minor groove and promotes DNA bending. Also involved in pre-mRNA splicing. In male adult brain involved in the maintenance of motor functions of dopaminergic neurons. Its function is as follows. Constitutes the major isoform, which is necessary and sufficient for initiating male sex determination. Functionally, constitutes a minor isoform, which is unstable due to the presence of a degron at the C-terminus that promotes its degradation. Not necessary and sufficient for initiating male sex determination. The chain is Sex-determining region Y protein from Mus musculus (Mouse).